Reading from the N-terminus, the 327-residue chain is MLFLLLPLLAVLPGDGNADGLKEPLSFHVTWIASFYNHSWKQNLVSGWLSDLQTHTWDSNSSTIVFLCPWSRGNFSNEEWKELETLFRIRTIRSFEGIRRYAHELQFEYPFEIQVTGGCELHSGKVSGSFLQLAYQGSDFVSFQNNSWLPYPVAGNMAKHFCKVLNQNQHENDITHNLLSDTCPRFILGLLDAGKAHLQRQVKPEAWLSHGPSPGPGHLQLVCHVSGFYPKPVWVMWMRGEQEQQGTQRGDILPSADGTWYLRATLEVAAGEAADLSCRVKHSSLEGQDIVLYWEHHSSVGFIILAVIVPLLLLIGLALWFRKRCFC.

The N-terminal stretch at 1–16 is a signal peptide; that stretch reads MLFLLLPLLAVLPGDG. Topologically, residues 17 to 300 are extracellular; it reads NADGLKEPLS…VLYWEHHSSV (284 aa). Residues Asn37, Asn60, and Asn74 are each glycosylated (N-linked (GlcNAc...) asparagine). 90–94 is a binding site for a D-galactosylceramide; the sequence is RTIRS. 2 disulfides stabilise this stretch: Cys119–Cys183 and Cys223–Cys278. Asn145 carries N-linked (GlcNAc...) asparagine glycosylation. 2 residues coordinate a D-galactosylceramide: Glu171 and Thr175. Residues 184 to 291 form the Ig-like domain; that stretch reads PRFILGLLDA…HSSLEGQDIV (108 aa). A helical transmembrane segment spans residues 301–321; it reads GFIILAVIVPLLLLIGLALWF. Residues 322-327 lie on the Cytoplasmic side of the membrane; it reads RKRCFC.

Heterodimer with B2M (beta-2-microglobulin). Interacts with CD74. Expressed on cortical thymocytes, epidermal Langerhans cells, dendritic cells, on certain T-cell leukemias, and in various other tissues.

Its subcellular location is the cell membrane. It is found in the membrane raft. The protein resides in the endosome membrane. Its function is as follows. Antigen-presenting protein that binds self and non-self lipid and glycolipid antigens and presents them to T-cell receptors on natural killer T-cells. The protein is T-cell surface glycoprotein CD1a (CD1A) of Homo sapiens (Human).